A 427-amino-acid polypeptide reads, in one-letter code: Sialic acid TRAP transporter large permease protein SiaM (427 aa).

The next 12 membrane-spanning stretches (helical) occupy residues 11–31 (LLFA…AFLI), 52–72 (FTLL…SAGI), 82–102 (SLVG…SLLF), 140–160 (ASCI…YGVV), 165–185 (IGAL…ALMV), 214–234 (AFLS…GKFT), 246–266 (ALFL…IEIL), 270–290 (VNTT…GWIV), 301–321 (DYFL…NLLL), 322–342 (LFLG…PFLV), 348–368 (VGID…IGIL), and 394–414 (VLPL…FPQF).

This sequence belongs to the TRAP transporter large permease family. The complex comprises the extracytoplasmic solute receptor protein SiaP, and the two transmembrane proteins SiaQ and SiaM. SiaQ and SiaM form a tight 1:1 complex.

It is found in the cell inner membrane. Its function is as follows. Part of the tripartite ATP-independent periplasmic (TRAP) transport system SiaPQM that catalyzes unidirectional Na(+)-dependent sialic acid uptake. This chain is Sialic acid TRAP transporter large permease protein SiaM, found in Vibrio cholerae serotype O1 (strain ATCC 39315 / El Tor Inaba N16961).